A 354-amino-acid polypeptide reads, in one-letter code: tRNase Z TRZ2, chloroplastic (354 aa).

The segment at 1-21 is disordered; it reads MQLSSSFPISPPKIFPSTKHH. The transit peptide at 1 to 68 directs the protein to the chloroplast; the sequence is MQLSSSFPIS…EEEEEYRKAR (68 aa).

Belongs to the RNase Z family. In terms of assembly, homodimer. It depends on Zn(2+) as a cofactor. The cofactor is Ca(2+). Mn(2+) is required as a cofactor. Requires Mg(2+) as cofactor. As to expression, highly expressed in green and actively dividing tissues.

The protein localises to the plastid. It localises to the chloroplast. It carries out the reaction Endonucleolytic cleavage of RNA, removing extra 3' nucleotides from tRNA precursor, generating 3' termini of tRNAs. A 3'-hydroxy group is left at the tRNA terminus and a 5'-phosphoryl group is left at the trailer molecule.. In terms of biological role, zinc phosphodiesterase, which displays tRNA 3'-processing endonuclease activity. Involved in tRNA maturation, by removing a 3'-trailer from precursor tRNA. The sequence is that of tRNase Z TRZ2, chloroplastic from Arabidopsis thaliana (Mouse-ear cress).